A 274-amino-acid chain; its full sequence is tRNA pseudouridine synthase A (274 aa).

D56 (nucleophile) is an active-site residue. Y109 contributes to the substrate binding site.

This sequence belongs to the tRNA pseudouridine synthase TruA family.

The enzyme catalyses uridine(38/39/40) in tRNA = pseudouridine(38/39/40) in tRNA. Functionally, formation of pseudouridine at positions 38, 39 and 40 in the anticodon stem and loop of transfer RNAs. This Methanosphaera stadtmanae (strain ATCC 43021 / DSM 3091 / JCM 11832 / MCB-3) protein is tRNA pseudouridine synthase A.